The sequence spans 177 residues: Iron-sulfur cluster assembly protein SufA (177 aa).

The N-terminal stretch at 1–18 (MTIHIFLCFLLILKIVNA) is a signal peptide. [4Fe-4S] cluster-binding residues include cysteine 101, cysteine 169, and cysteine 171.

Belongs to the HesB/IscA family. Homodimer. Homotetramer formation is observed in vitro.

The protein localises to the plastid. The protein resides in the apicoplast. It participates in cofactor biosynthesis; iron-sulfur cluster biosynthesis. Functionally, participates in the sulfur mobilization (SUF) pathway for iron-sulfur (Fe-S) cluster biogenesis. Involved in the pre-assembly of [4Fe-4S] clusters and their transfer to target proteins. The protein is Iron-sulfur cluster assembly protein SufA of Plasmodium falciparum (isolate 3D7).